Consider the following 1009-residue polypeptide: MAGNIVKWWKHKILGGYKQFSVQECTTDSEELMYHQVRASSSCSAPPDLLLVSERDNNIQLRSPVVNIITTPPGNASGSASNKQQQLQQQQGHQHHHQAMPMPHTHASRHHHHQQQQQQQLPQDMSSSGSHTKHLRISSSSGGKHGKYANMQQQQQQQQTAAAATGVDEDVVDAAAAAAAAPHGAHQQMHSRHLHHHKEERIRLEEFTCDVSVEGGKSSQPLQFSFTFYDLDGHHGKITKDDIVGIVYTIYESIGKSVVVPHCGSKTINVRLTVSPEGKSKSAQQPAMAMGVVPASVPLPAAALGNNNNSNNNNNNKLKKLPTGLAAMSKQMNGGNGGGGALTTSAGTRRQHRYRPRKLIKSDDEDDDSNSEKEKERERERERESHAADQQPSGSGSKGAGSKSHHHHHHHGRYQKNQSGAKLEHQQQQQQQLCCADTPDNTYENMLNLKQDTQAAGNEATVPDCPSSHRQLHHQRQQDIYMKQATQRVKMLRRARKQKYQDHCLETRQRSLSVGNDSGNWQNRHLQQSLQQQPQAAHKSASVSPPPLAGELMLDGVQLRQPRPPHQSHHQQLQQQQQQRKSAECWKSALNRNDLISIIRESMEKNRLCFQLNGKPQANVSPIRQPAAQQQQQQQRQRSSTGSKIPTLIANHSPAAPQSPLSCSPPPCTLSLSLSSSNHPAAATCSIPVPAQAQAQGQAQAQAQVPAPPAVIEVGGGHHQHDHPQPHIPIYHQQLAINPAVLAAQHSHNSAHNKLNLCGYDSFLHATICGGGSAAHSPPPTPSNVATVQPIPKKSHNQKSLLQGYQRLEQQQQQRSSKDYKNYGNLIYAKLSEQLQQKEREQRRHRHKQQQQQHHHQQQQQQQQQQNQQQQQQQQPLKPKEESLAEQRPPTSSSSSAGSKIFGDALECAHLLASEEEDLPASPPLTHSTPSKVVSTDTLIDLNDDVGEAVAEAVTESGGKQQQQQALEADEGQEQEVELDTSASSSMIHRYVHEHIHHHYHHFKEQQDV.

Polar residues-rich tracts occupy residues 68–83 (IITT…ASNK) and 121–130 (LPQDMSSSGS). A disordered region spans residues 68-166 (IITTPPGNAS…QQQTAAAATG (99 aa)). The span at 152-166 (QQQQQQQQTAAAATG) shows a compositional bias: low complexity. The interaction with dsh stretch occupies residues 206-282 (EFTCDVSVEG…TVSPEGKSKS (77 aa)). The EF-hand domain occupies 217–253 (KSSQPLQFSFTFYDLDGHHGKITKDDIVGIVYTIYES). Disordered regions lie at residues 328–433 (MSKQ…QQQL), 456–479 (AGNE…RQQD), and 515–580 (GNDS…QQQR). Residues 349–359 (RRQHRYRPRKL) show a composition bias toward basic residues. Positions 370–387 (NSEKEKERERERERESHA) are enriched in basic and acidic residues. Basic residues predominate over residues 403 to 414 (KSHHHHHHHGRY). Polar residues predominate over residues 515 to 525 (GNDSGNWQNRH). Composition is skewed to low complexity over residues 526 to 535 (LQQSLQQQPQ) and 570 to 580 (HQQLQQQQQQR). Positions 584–613 (ECWKSALNRNDLISIIRESMEKNRLCFQLN) are required for nuclear localization and inhibition of Wnt signaling. 4 disordered regions span residues 619 to 662 (NVSP…SPLS), 773 to 799 (SAAH…HNQK), 835 to 899 (LQQK…SAGS), and 955 to 982 (TESG…LDTS). 2 stretches are compositionally biased toward low complexity: residues 624–638 (RQPA…QRQR) and 653–662 (SPAAPQSPLS). Basic residues predominate over residues 843 to 857 (RRHRHKQQQQQHHHQ). Over residues 858 to 875 (QQQQQQQQQNQQQQQQQQ) the composition is skewed to low complexity. The span at 968 to 979 (EADEGQEQEVEL) shows a compositional bias: acidic residues.

This sequence belongs to the NKD family. Interacts with dsh.

It localises to the cell membrane. The protein resides in the cytoplasm. The protein localises to the nucleus. In terms of biological role, cell autonomous antagonist of the canonical Wnt signaling pathway. May activate a second Wnt signaling pathway that controls planar cell polarity. Required for neuroblast specification. In Drosophila pseudoobscura pseudoobscura (Fruit fly), this protein is Protein naked cuticle.